The following is a 620-amino-acid chain: Glutathione-regulated potassium-efflux system protein KefC (620 aa).

12 helical membrane-spanning segments follow: residues His4 to Val24, Leu26 to Leu46, Ser54 to Leu74, Gly90 to Leu110, Val114 to Met134, Phe149 to Leu169, Met178 to Leu198, Val218 to Gly238, Gly270 to Ile290, Leu294 to Ile314, Trp327 to Gln347, and Ser359 to Asn379. Residues Gln399 to Thr518 form the RCK N-terminal domain. The segment at Gly597 to Ser620 is disordered.

The protein belongs to the monovalent cation:proton antiporter 2 (CPA2) transporter (TC 2.A.37) family. KefC subfamily. As to quaternary structure, homodimer. Interacts with the regulatory subunit KefF.

It localises to the cell inner membrane. In terms of biological role, pore-forming subunit of a potassium efflux system that confers protection against electrophiles. Catalyzes K(+)/H(+) antiport. The chain is Glutathione-regulated potassium-efflux system protein KefC from Escherichia coli O17:K52:H18 (strain UMN026 / ExPEC).